Here is a 212-residue protein sequence, read N- to C-terminus: ATP-dependent dethiobiotin synthetase BioD (212 aa).

12 to 17 (DCGKTF) provides a ligand contact to ATP. Position 16 (Thr-16) interacts with Mg(2+). The active site involves Lys-33. Ser-37 serves as a coordination point for substrate. ATP is bound by residues Asp-50, 110 to 113 (EGAG), and 170 to 171 (NC). Residues Asp-50 and Glu-110 each coordinate Mg(2+).

This sequence belongs to the dethiobiotin synthetase family. In terms of assembly, homodimer. It depends on Mg(2+) as a cofactor.

It localises to the cytoplasm. The enzyme catalyses (7R,8S)-7,8-diammoniononanoate + CO2 + ATP = (4R,5S)-dethiobiotin + ADP + phosphate + 3 H(+). Its pathway is cofactor biosynthesis; biotin biosynthesis; biotin from 7,8-diaminononanoate: step 1/2. Functionally, catalyzes a mechanistically unusual reaction, the ATP-dependent insertion of CO2 between the N7 and N8 nitrogen atoms of 7,8-diaminopelargonic acid (DAPA, also called 7,8-diammoniononanoate) to form a ureido ring. This is ATP-dependent dethiobiotin synthetase BioD from Legionella pneumophila (strain Paris).